Here is a 262-residue protein sequence, read N- to C-terminus: tRNA 4-demethylwyosine(37)-methyltransferase Taw21 (262 aa).

S-adenosyl-L-methionine-binding positions include His-108, Phe-125, 148 to 149 (DL), and 175 to 176 (DA).

It belongs to the class I-like SAM-binding methyltransferase superfamily. TRM5/TYW2 family.

It is found in the cytoplasm. It carries out the reaction 4-demethylwyosine(37) in tRNA(Phe) + S-adenosyl-L-methionine = isowyosine(37) in tRNA(Phe) + S-adenosyl-L-homocysteine + H(+). Catalyzes the C7-methylation of 4-demethylwyosine (imG-14) at position 37 in tRNA(Phe). The chain is tRNA 4-demethylwyosine(37)-methyltransferase Taw21 from Saccharolobus solfataricus (strain ATCC 35092 / DSM 1617 / JCM 11322 / P2) (Sulfolobus solfataricus).